Here is a 215-residue protein sequence, read N- to C-terminus: UPF0502 protein Shal_1801 (215 aa).

It belongs to the UPF0502 family.

The chain is UPF0502 protein Shal_1801 from Shewanella halifaxensis (strain HAW-EB4).